The chain runs to 229 residues: MSLPKPPLTELEKIVGYSFEQQGLLHQAMTHRSASSTHNERLEFLGDSILGLVIAEALYQKFPKVAEGDLSRMRAAIVCGRSLAKLGKKMGLGDFLSLGQGELKSGGYRRESILADAVEAIIGAIYLDSDMDTIRQVILNWFEPQLTLIEPGTSQKDPKTRLQELLQARQKPLPEYDVVATQGQAHNQQFTVNCSVEGIESPFKGTGTSRRKAEQAAATAALEHLQESA.

Residues 8-130 enclose the RNase III domain; that stretch reads LTELEKIVGY…IIGAIYLDSD (123 aa). E43 provides a ligand contact to Mg(2+). The active site involves D47. Positions 116 and 119 each coordinate Mg(2+). E119 is an active-site residue. In terms of domain architecture, DRBM spans 157–227; sequence DPKTRLQELL…ATAALEHLQE (71 aa). A disordered region spans residues 201-229; the sequence is SPFKGTGTSRRKAEQAAATAALEHLQESA.

Belongs to the ribonuclease III family. In terms of assembly, homodimer. Requires Mg(2+) as cofactor.

The protein resides in the cytoplasm. The catalysed reaction is Endonucleolytic cleavage to 5'-phosphomonoester.. Functionally, digests double-stranded RNA. Involved in the processing of primary rRNA transcript to yield the immediate precursors to the large and small rRNAs (23S and 16S). Processes some mRNAs, and tRNAs when they are encoded in the rRNA operon. Processes pre-crRNA and tracrRNA of type II CRISPR loci if present in the organism. In Idiomarina loihiensis (strain ATCC BAA-735 / DSM 15497 / L2-TR), this protein is Ribonuclease 3.